Consider the following 176-residue polypeptide: Probable inosine/xanthosine triphosphatase (176 aa).

D36 lines the Mg(2+) pocket.

It belongs to the YjjX NTPase family. In terms of assembly, homodimer. Mg(2+) serves as cofactor. It depends on Mn(2+) as a cofactor.

The catalysed reaction is XTP + H2O = XDP + phosphate + H(+). It carries out the reaction ITP + H2O = IDP + phosphate + H(+). In terms of biological role, phosphatase that hydrolyzes non-canonical purine nucleotides such as XTP and ITP to their respective diphosphate derivatives. Probably excludes non-canonical purines from DNA/RNA precursor pool, thus preventing their incorporation into DNA/RNA and avoiding chromosomal lesions. The chain is Probable inosine/xanthosine triphosphatase from Saccharolobus islandicus (strain M.14.25 / Kamchatka #1) (Sulfolobus islandicus).